A 439-amino-acid chain; its full sequence is Membrane sensor protein UhpC (439 aa).

Over 1-25 (MLPFLKAPADAPLMTDKYEIDARYR) the chain is Cytoplasmic. The helical transmembrane segment at 26-45 (YWRRHILLTIWLGYALFYFT) threads the bilayer. At 46–66 (RKSFNAAVPEILANGVLSRSD) the chain is on the periplasmic side. A helical membrane pass occupies residues 67 to 87 (IGLLATLFYITYGVSKFVSGI). The Cytoplasmic portion of the chain corresponds to 88 to 95 (VSDRSNAR). A helical membrane pass occupies residues 96 to 118 (YFMGIGLIATGIINILFGFSTSL). The Periplasmic portion of the chain corresponds to 119–121 (WAF). A helical membrane pass occupies residues 122 to 144 (AVLWVLNAFFQGWGSPVCARLLT). Residues 145–162 (AWYSRTERGGWWALWNTA) are Cytoplasmic-facing. The helical transmembrane segment at 163–183 (HNVGGALIPIVMAAAALHYGW) threads the bilayer. Position 184 (R184) is a topological domain, periplasmic. Residues 185–205 (AGMMIAGCMAIVVGIFLCWRL) traverse the membrane as a helical segment. The Cytoplasmic segment spans residues 206-244 (RDRPQALGLPAVGEWRHDALEIAQQQEGAGLTRKEILTK). The helical transmembrane segment at 245–265 (YVLLNPYIWLLSFCYVLVYVV) threads the bilayer. At 266-289 (RAAINDWGNLYMSETLGVDLVTAN) the chain is on the periplasmic side. A helical transmembrane segment spans residues 290 to 310 (TAVTMFELGGFIGALVAGWGS). Residues 311-322 (DKLFNGNRGPMN) are Cytoplasmic-facing. The chain crosses the membrane as a helical span at residues 323-343 (LIFAAGILLSVGSLWLMPFAS). The Periplasmic portion of the chain corresponds to 344–349 (YVMQAT). The helical transmembrane segment at 350–370 (CFFTIGFFVFGPQMLIGMAAA) threads the bilayer. Residues 371–379 (ECSHKEAAG) are Cytoplasmic-facing. The helical transmembrane segment at 380–400 (AATGFVGLFAYLGASLAGWPL) threads the bilayer. The Periplasmic segment spans residues 401-410 (AKVLDTWHWS). The helical transmembrane segment at 411-431 (GFFVVISIAAGISALLLLPFL) threads the bilayer. The Cytoplasmic segment spans residues 432–439 (NAQTPREA).

This sequence belongs to the major facilitator superfamily. Organophosphate:Pi antiporter (OPA) (TC 2.A.1.4) family.

It is found in the cell inner membrane. Part of the UhpABC signaling cascade that controls the expression of the hexose phosphate transporter UhpT. UhpC senses external glucose-6-phosphate and interacts with the histidine kinase UhpB, leading to the stimulation of the autokinase activity of UhpB. The sequence is that of Membrane sensor protein UhpC from Escherichia coli (strain K12).